The primary structure comprises 217 residues: LexA repressor (217 aa).

A DNA-binding region (H-T-H motif) is located at residues 28 to 48 (RAEIAAEFGFSSPNAAEEHLR). Residues serine 136 and lysine 173 each act as for autocatalytic cleavage activity in the active site.

The protein belongs to the peptidase S24 family. In terms of assembly, homodimer.

It carries out the reaction Hydrolysis of Ala-|-Gly bond in repressor LexA.. In terms of biological role, represses a number of genes involved in the response to DNA damage (SOS response), including recA and lexA. In the presence of single-stranded DNA, RecA interacts with LexA causing an autocatalytic cleavage which disrupts the DNA-binding part of LexA, leading to derepression of the SOS regulon and eventually DNA repair. The protein is LexA repressor of Cupriavidus taiwanensis (strain DSM 17343 / BCRC 17206 / CCUG 44338 / CIP 107171 / LMG 19424 / R1) (Ralstonia taiwanensis (strain LMG 19424)).